The primary structure comprises 293 residues: NAD kinase (293 aa).

Residue Asp-72 is the Proton acceptor of the active site. Residues 72-73 (DG), 146-147 (ND), Arg-157, Lys-174, Asp-176, 187-192 (TAYALS), and Gln-247 contribute to the NAD(+) site.

Belongs to the NAD kinase family. The cofactor is a divalent metal cation.

It is found in the cytoplasm. The enzyme catalyses NAD(+) + ATP = ADP + NADP(+) + H(+). Functionally, involved in the regulation of the intracellular balance of NAD and NADP, and is a key enzyme in the biosynthesis of NADP. Catalyzes specifically the phosphorylation on 2'-hydroxyl of the adenosine moiety of NAD to yield NADP. The sequence is that of NAD kinase from Marinomonas sp. (strain MWYL1).